Reading from the N-terminus, the 604-residue chain is Glutamine--fructose-6-phosphate aminotransferase [isomerizing] (604 aa).

Cys-2 acts as the Nucleophile; for GATase activity in catalysis. The Glutamine amidotransferase type-2 domain maps to 2 to 218; the sequence is CGIVGVVGNR…DKELVVLTKD (217 aa). SIS domains lie at 284–423 and 456–594; these read IVKS…ANGK and VANL…VDKP. Lys-599 acts as the For Fru-6P isomerization activity in catalysis.

In terms of assembly, homodimer.

It localises to the cytoplasm. The enzyme catalyses D-fructose 6-phosphate + L-glutamine = D-glucosamine 6-phosphate + L-glutamate. Its function is as follows. Catalyzes the first step in hexosamine metabolism, converting fructose-6P into glucosamine-6P using glutamine as a nitrogen source. In Streptococcus mutans serotype c (strain ATCC 700610 / UA159), this protein is Glutamine--fructose-6-phosphate aminotransferase [isomerizing].